The sequence spans 84 residues: Transmembrane protein EP84R (84 aa).

The next 2 helical transmembrane spans lie at 31-51 (VIGV…IIIL) and 60-80 (AASI…FLIY).

The protein belongs to the asfivirus EP84R family.

The protein resides in the virion membrane. This chain is Transmembrane protein EP84R, found in Ornithodoros (relapsing fever ticks).